The following is a 484-amino-acid chain: Pyruvate kinase (484 aa).

Arg-33 provides a ligand contact to substrate. 4 residues coordinate K(+): Asn-35, Ser-37, Asp-67, and Thr-68. Residue 35 to 38 (NFSH) coordinates ATP. Residues Arg-74 and Lys-155 each contribute to the ATP site. Glu-221 serves as a coordination point for Mg(2+). 3 residues coordinate substrate: Gly-244, Asp-245, and Thr-277. Asp-245 provides a ligand contact to Mg(2+).

The protein belongs to the pyruvate kinase family. In terms of assembly, homotetramer. Requires Mg(2+) as cofactor. It depends on K(+) as a cofactor.

It catalyses the reaction pyruvate + ATP = phosphoenolpyruvate + ADP + H(+). It functions in the pathway carbohydrate degradation; glycolysis; pyruvate from D-glyceraldehyde 3-phosphate: step 5/5. The polypeptide is Pyruvate kinase (pyk) (Chlamydia pneumoniae (Chlamydophila pneumoniae)).